A 377-amino-acid polypeptide reads, in one-letter code: 2-iminoacetate synthase (377 aa).

The Radical SAM core domain maps to 71–301; that stretch reads NTVSFYVPLY…PEIELSLSTR (231 aa). Residues Cys-85, Cys-89, and Cys-92 each contribute to the [4Fe-4S] cluster site.

It belongs to the radical SAM superfamily. ThiH family. As to quaternary structure, forms a heterodimer with ThiG. It depends on [4Fe-4S] cluster as a cofactor.

It catalyses the reaction L-tyrosine + S-adenosyl-L-methionine + NADPH = 2-iminoacetate + 4-methylphenol + 5'-deoxyadenosine + L-methionine + NADP(+). It participates in cofactor biosynthesis; thiamine diphosphate biosynthesis. Catalyzes the radical-mediated cleavage of tyrosine to 2-iminoacetate and 4-cresol. The sequence is that of 2-iminoacetate synthase (thiH) from Salmonella typhimurium (strain LT2 / SGSC1412 / ATCC 700720).